The following is an 86-amino-acid chain: Small ribosomal subunit protein bS16 (86 aa).

The protein belongs to the bacterial ribosomal protein bS16 family.

The sequence is that of Small ribosomal subunit protein bS16 from Xylella fastidiosa (strain 9a5c).